The primary structure comprises 289 residues: ATP synthase gamma chain (289 aa).

It belongs to the ATPase gamma chain family. As to quaternary structure, F-type ATPases have 2 components, CF(1) - the catalytic core - and CF(0) - the membrane proton channel. CF(1) has five subunits: alpha(3), beta(3), gamma(1), delta(1), epsilon(1). CF(0) has three main subunits: a, b and c.

It localises to the cell inner membrane. In terms of biological role, produces ATP from ADP in the presence of a proton gradient across the membrane. The gamma chain is believed to be important in regulating ATPase activity and the flow of protons through the CF(0) complex. This Janthinobacterium sp. (strain Marseille) (Minibacterium massiliensis) protein is ATP synthase gamma chain.